Consider the following 181-residue polypeptide: Cytochrome c oxidase subunit 2 (181 aa).

Residues cysteine 126, glutamate 128, cysteine 130, histidine 134, and methionine 137 each coordinate Cu cation. Residue glutamate 128 coordinates Mg(2+).

It belongs to the cytochrome c oxidase subunit 2 family. As to quaternary structure, component of the cytochrome c oxidase (complex IV, CIV), a multisubunit enzyme composed of a catalytic core of 3 subunits and several supernumerary subunits. The complex exists as a monomer or a dimer and forms supercomplexes (SCs) in the inner mitochondrial membrane with ubiquinol-cytochrome c oxidoreductase (cytochrome b-c1 complex, complex III, CIII). Requires Cu cation as cofactor.

It is found in the mitochondrion inner membrane. It carries out the reaction 4 Fe(II)-[cytochrome c] + O2 + 8 H(+)(in) = 4 Fe(III)-[cytochrome c] + 2 H2O + 4 H(+)(out). In terms of biological role, component of the cytochrome c oxidase, the last enzyme in the mitochondrial electron transport chain which drives oxidative phosphorylation. The respiratory chain contains 3 multisubunit complexes succinate dehydrogenase (complex II, CII), ubiquinol-cytochrome c oxidoreductase (cytochrome b-c1 complex, complex III, CIII) and cytochrome c oxidase (complex IV, CIV), that cooperate to transfer electrons derived from NADH and succinate to molecular oxygen, creating an electrochemical gradient over the inner membrane that drives transmembrane transport and the ATP synthase. Cytochrome c oxidase is the component of the respiratory chain that catalyzes the reduction of oxygen to water. Electrons originating from reduced cytochrome c in the intermembrane space (IMS) are transferred via the dinuclear copper A center (CU(A)) of subunit 2 and heme A of subunit 1 to the active site in subunit 1, a binuclear center (BNC) formed by heme A3 and copper B (CU(B)). The BNC reduces molecular oxygen to 2 water molecules using 4 electrons from cytochrome c in the IMS and 4 protons from the mitochondrial matrix. In Paramecium primaurelia, this protein is Cytochrome c oxidase subunit 2 (COII).